The following is a 148-amino-acid chain: Photosystem I reaction center subunit XI (148 aa).

3 helical membrane passes run 48 to 68 (LEIG…LGPL), 73 to 93 (IGLL…TLGL), and 122 to 142 (GGFF…LSSI).

It belongs to the PsaL family.

The protein resides in the plastid. Its subcellular location is the chloroplast thylakoid membrane. The polypeptide is Photosystem I reaction center subunit XI (Thalassiosira pseudonana (Marine diatom)).